The following is a 158-amino-acid chain: U-limacoditoxin(8)-Dv66 (158 aa).

The first 24 residues, 1 to 24, serve as a signal peptide directing secretion; sequence MALRAPWIALCCVLAVLFVVPAAT. The propeptide occupies 25-32; that stretch reads RDEERQKR. 2 consecutive repeat copies span residues 33–78 and 79–124. The 3 X 46 AA tandem repeats stretch occupies residues 33-158; the sequence is GVDFGLQRGF…AQDPHGPGRK (126 aa). Residue P63 is modified to Proline amide. The propeptide occupies 64 to 78; that stretch reads GRKRRDAYEMERQKR. A disordered region spans residues 101–120; sequence ARAQDPHGPGRKRRDAYEME. P109 is modified (proline amide). A propeptide spanning residues 110-124 is cleaved from the precursor; it reads GRKRRDAYEMERQKR. A 3; half-length repeat occupies 125–158; sequence GVDFGLQRGFSGSELAKLKLALARAQDPHGPGRK. Position 155 is a proline amide (P155).

The protein belongs to the diuretic hormone class 2 family. Expressed by the venom secretory cell of the spine. The spine is a cuticular structure containing a single large nucleated venom-secreting cell at its base. It is an independent unit capable of producing, storing and injecting venom. On the back of D.vulnerans caterpillars, spines are grouped together by 50 to 100 to form scoli, of which there are eight in D.vulnerans.

It localises to the secreted. Probable toxin. Does not show insecticidal, antimicrobial and antiparasitic activities. Does not induce increase in intracellular calcium in mouse DRG neurons, suggesting that it does not induce pain. The polypeptide is U-limacoditoxin(8)-Dv66 (Doratifera vulnerans (Mottled cup moth)).